A 263-amino-acid chain; its full sequence is Glutamate racemase (263 aa).

Substrate-binding positions include 13–14 (DS) and 45–46 (YG). The Proton donor/acceptor role is filled by cysteine 77. 78–79 (NT) contributes to the substrate binding site. Residue cysteine 185 is the Proton donor/acceptor of the active site. Position 186–187 (186–187 (TH)) interacts with substrate.

It belongs to the aspartate/glutamate racemases family.

The catalysed reaction is L-glutamate = D-glutamate. It participates in cell wall biogenesis; peptidoglycan biosynthesis. Functionally, provides the (R)-glutamate required for cell wall biosynthesis. The protein is Glutamate racemase of Vibrio vulnificus (strain CMCP6).